We begin with the raw amino-acid sequence, 185 residues long: Guanylate kinase (185 aa).

The Guanylate kinase-like domain occupies 4–181; that stretch reads GALYVVSGPS…ACNDLISIIE (178 aa). ATP is bound at residue 11 to 18; sequence GPSGAGKS.

It belongs to the guanylate kinase family.

Its subcellular location is the cytoplasm. It carries out the reaction GMP + ATP = GDP + ADP. Essential for recycling GMP and indirectly, cGMP. This chain is Guanylate kinase, found in Fusobacterium nucleatum subsp. nucleatum (strain ATCC 25586 / DSM 15643 / BCRC 10681 / CIP 101130 / JCM 8532 / KCTC 2640 / LMG 13131 / VPI 4355).